The primary structure comprises 147 residues: Lipoprotein YafY (147 aa).

Residues methionine 1–alanine 20 form the signal peptide. Cysteine 21 is lipidated: N-palmitoyl cysteine. Cysteine 21 is lipidated: S-diacylglycerol cysteine.

It to E.coli YfjS.

It localises to the cell inner membrane. Functionally, when overproduced strongly induces degP through the activation of the two-component envelope stress response system CpxA/CpxR. In Escherichia coli (strain K12), this protein is Lipoprotein YafY (yafY).